We begin with the raw amino-acid sequence, 170 residues long: Acetyl-CoA decarbonylase/synthase complex subunit epsilon 2 (170 aa).

Belongs to the CdhB family. As to quaternary structure, heterotetramer of two alpha and two epsilon subunits. The ACDS complex is made up of alpha, epsilon, beta, gamma and delta subunits with a probable stoichiometry of (alpha(2)epsilon(2))(4)-beta(8)-(gamma(1)delta(1))(8).

The protein operates within one-carbon metabolism; methanogenesis from acetate. Functionally, part of a complex that catalyzes the reversible cleavage of acetyl-CoA, allowing growth on acetate as sole source of carbon and energy. The alpha-epsilon subcomponent functions as a carbon monoxide dehydrogenase. The precise role of the epsilon subunit is unclear; it may have a stabilizing role within the alpha(2)epsilon(2) component and/or be involved in electron transfer to FAD during a potential FAD-mediated CO oxidation. The chain is Acetyl-CoA decarbonylase/synthase complex subunit epsilon 2 (cdhB2) from Methanosarcina acetivorans (strain ATCC 35395 / DSM 2834 / JCM 12185 / C2A).